We begin with the raw amino-acid sequence, 341 residues long: Protein pelota homolog (341 aa).

This sequence belongs to the eukaryotic release factor 1 family. Pelota subfamily. Monomer. The cofactor is a divalent metal cation.

The protein localises to the cytoplasm. Its function is as follows. May function in recognizing stalled ribosomes, interact with stem-loop structures in stalled mRNA molecules, and effect endonucleolytic cleavage of the mRNA. May play a role in the release non-functional ribosomes and degradation of damaged mRNAs. Has endoribonuclease activity. The polypeptide is Protein pelota homolog (Metallosphaera sedula (strain ATCC 51363 / DSM 5348 / JCM 9185 / NBRC 15509 / TH2)).